The chain runs to 295 residues: MITELHGIDIRENEPLKHYTYTKVGGPADFLAFPRNHYELSRIVAYANKENMPWLVLGNASNLIVRDGGIRGFVIMFDKLNAVHLNGYTLEAEAGANLIETTKIAKFHSLTGFEFACGIPGSIGGAVFMNAGAYGGEISHIFLSAKVLTPSGEIKTISARDMAFGYRHSAIQETGDIVISAKFALKPGNYDTISQEMNRLNHLRQLKQPLEFPSCGSVFKRPPGHFAGQLIMEANLKGHRIGGVEVSEKHAGFMINVADGTAKDYEDLIAYVIETVENHSGVRLEPEVRIIGENL.

In terms of domain architecture, FAD-binding PCMH-type spans 23-188; the sequence is KVGGPADFLA…ISAKFALKPG (166 aa). The active site involves Arg167. The Proton donor role is filled by Ser217. Glu287 is an active-site residue.

This sequence belongs to the MurB family. It depends on FAD as a cofactor.

Its subcellular location is the cytoplasm. It carries out the reaction UDP-N-acetyl-alpha-D-muramate + NADP(+) = UDP-N-acetyl-3-O-(1-carboxyvinyl)-alpha-D-glucosamine + NADPH + H(+). The protein operates within cell wall biogenesis; peptidoglycan biosynthesis. Functionally, cell wall formation. This is UDP-N-acetylenolpyruvoylglucosamine reductase from Streptococcus pyogenes serotype M18 (strain MGAS8232).